The primary structure comprises 131 residues: Proteinase inhibitor (131 aa).

A signal peptide spans 1 to 26 (MSASAKLSRMVCLLCGFFSTGISMAS). The cysteines at positions 51 and 74 are disulfide-linked.

Belongs to the protease inhibitor I38 family.

The protein resides in the periplasm. Functionally, inhibitor of the alkaline protease. It forms a non-covalent bond with the protease and may prevent its autocatalytic cleavage in the periplasm. This is Proteinase inhibitor (inh) from Pseudomonas aeruginosa (strain ATCC 15692 / DSM 22644 / CIP 104116 / JCM 14847 / LMG 12228 / 1C / PRS 101 / PAO1).